The chain runs to 179 residues: Translation initiation factor IF-3 (179 aa).

It belongs to the IF-3 family. Monomer.

Its subcellular location is the cytoplasm. Its function is as follows. IF-3 binds to the 30S ribosomal subunit and shifts the equilibrium between 70S ribosomes and their 50S and 30S subunits in favor of the free subunits, thus enhancing the availability of 30S subunits on which protein synthesis initiation begins. The sequence is that of Translation initiation factor IF-3 from Buchnera aphidicola subsp. Acyrthosiphon pisum (strain APS) (Acyrthosiphon pisum symbiotic bacterium).